We begin with the raw amino-acid sequence, 442 residues long: tRNA pseudouridine(38/39) synthase (442 aa).

The Nucleophile role is filled by aspartate 151. Position 222 (tyrosine 222) interacts with substrate.

It belongs to the tRNA pseudouridine synthase TruA family.

It is found in the nucleus. The enzyme catalyses uridine(38/39) in tRNA = pseudouridine(38/39) in tRNA. Functionally, formation of pseudouridines at positions 38 and 39 in the anticodon stem and loop of transfer RNAs. In Saccharomyces cerevisiae (strain ATCC 204508 / S288c) (Baker's yeast), this protein is tRNA pseudouridine(38/39) synthase (DEG1).